The chain runs to 177 residues: NADH-quinone oxidoreductase subunit B (177 aa).

Positions 56, 57, 121, and 151 each coordinate [4Fe-4S] cluster.

Belongs to the complex I 20 kDa subunit family. As to quaternary structure, NDH-1 is composed of 14 different subunits. Subunits NuoB, C, D, E, F, and G constitute the peripheral sector of the complex. Requires [4Fe-4S] cluster as cofactor.

It localises to the cell inner membrane. The catalysed reaction is a quinone + NADH + 5 H(+)(in) = a quinol + NAD(+) + 4 H(+)(out). NDH-1 shuttles electrons from NADH, via FMN and iron-sulfur (Fe-S) centers, to quinones in the respiratory chain. Couples the redox reaction to proton translocation (for every two electrons transferred, four hydrogen ions are translocated across the cytoplasmic membrane), and thus conserves the redox energy in a proton gradient. This Sphingopyxis alaskensis (strain DSM 13593 / LMG 18877 / RB2256) (Sphingomonas alaskensis) protein is NADH-quinone oxidoreductase subunit B.